The sequence spans 177 residues: Large ribosomal subunit protein uL6 (177 aa).

The protein belongs to the universal ribosomal protein uL6 family. In terms of assembly, part of the 50S ribosomal subunit.

This protein binds to the 23S rRNA, and is important in its secondary structure. It is located near the subunit interface in the base of the L7/L12 stalk, and near the tRNA binding site of the peptidyltransferase center. In Hydrogenovibrio crunogenus (strain DSM 25203 / XCL-2) (Thiomicrospira crunogena), this protein is Large ribosomal subunit protein uL6.